A 552-amino-acid polypeptide reads, in one-letter code: MNNSIISSVINSIDSSSKRTNIFSFDVQQPTAYMPQYISVNGYHNKKDNDANQVCSVSFDIRDQHIAAINYFFISIQLPEVSGEGKFAYVPYVGYKCIQHVAITCGDITIWETDGEELFDKCVDDKIASLSGYSPELNDISTGYTPNDTIKDPTTLYVYIKSPFDADKTISSLKLVNNKITVTITFRSINDVIVYDSKFQVERFVKDFVYSTELHLIAYAVSDIKPKSAYIELDRRVVSCSSTPTPIPVISDVYACTAMSVYVKPYYGMMENKFISYPGYKQTESDYVRCMVNRLLDDLVVVADTVPKGFPSTATFVKVPVDGQINLQDVDIIVKIDNVPDDKDIYYHTNLLIFGTRKNSFVYNISKKFSSIIGMYSPNTDSINFSKVNHTISITDASIPVSFWVSQKNVYQGDNRSNYSKSKDLVVNDPFRKGIDMVNKTDVISRLEVRFGNDPIYSEISPITKVFNMLLTGSSINMRKIIFNMNPANIFRPTTLNANTKRGKDKLTVRISYIDTDPNNPIHYVAKQLVVICTDLYRIDYDGNINITKITE.

It belongs to the poxviridae protein D13 family. Homotrimer. Self-assembles to form a layer. Interacts with A17 (via N-terminus); this interaction is necessary for D13 association with membranes.

It is found in the membrane. Functionally, scaffold protein which forms a transitory spherical honeycomb lattice providing curvature and rigidity to the convex membrane of crescent and immature virions (IV). This association occurs concomitantly with viral membrane formation. Targeted by the drug rifampicin, which prevents the formation of this lattice, and hence virus morphogenesis. In the presence of rifampicin, irregularly shaped membranes that lack the honeycomb layer accumulate around areas of electron-dense viroplasm. This layer is lost from virions during maturation from IV to mature virion (MV), through the proteolysis of A17 N-terminus. The chain is Scaffold protein from Vertebrata (FPV).